The primary structure comprises 101 residues: MAKKSMIQRELKREKLVAKYAQKRAEFKAIILDINSTEEQIWKAQIKLQKLPVNSSASRVQRRCKVTGRPHAVYRKFGLCRNKLREYAMAGDVPGLKKASW.

This sequence belongs to the universal ribosomal protein uS14 family. In terms of assembly, part of the 30S ribosomal subunit. Contacts proteins S3 and S10.

Functionally, binds 16S rRNA, required for the assembly of 30S particles and may also be responsible for determining the conformation of the 16S rRNA at the A site. In Francisella tularensis subsp. holarctica (strain FTNF002-00 / FTA), this protein is Small ribosomal subunit protein uS14.